The chain runs to 338 residues: ATPase GET3 (338 aa).

Residue 33-40 coordinates ATP; that stretch reads KGGVGKTT. The active site involves aspartate 62. 2 residues coordinate ATP: glutamate 242 and asparagine 269. Zn(2+)-binding residues include cysteine 280 and cysteine 283.

This sequence belongs to the arsA ATPase family. In terms of assembly, homodimer.

Its subcellular location is the cytoplasm. The protein localises to the endoplasmic reticulum. Its function is as follows. ATPase required for the post-translational delivery of tail-anchored (TA) proteins to the endoplasmic reticulum. Recognizes and selectively binds the transmembrane domain of TA proteins in the cytosol. This complex then targets to the endoplasmic reticulum by membrane-bound receptors, where the tail-anchored protein is released for insertion. This process is regulated by ATP binding and hydrolysis. ATP binding drives the homodimer towards the closed dimer state, facilitating recognition of newly synthesized TA membrane proteins. ATP hydrolysis is required for insertion. Subsequently, the homodimer reverts towards the open dimer state, lowering its affinity for the membrane-bound receptor, and returning it to the cytosol to initiate a new round of targeting. The protein is ATPase GET3 of Uncinocarpus reesii (strain UAMH 1704).